A 153-amino-acid chain; its full sequence is Bifunctional protein GAL10 (153 aa).

Residues 1-153 (MSDDIFLVTG…IPIPEHCPME (153 aa)) are galactowaldenase.

This sequence in the N-terminal section; belongs to the NAD(P)-dependent epimerase/dehydratase family. It in the C-terminal section; belongs to the aldose epimerase family. Requires NAD(+) as cofactor.

It carries out the reaction UDP-alpha-D-glucose = UDP-alpha-D-galactose. The catalysed reaction is alpha-D-glucose = beta-D-glucose. Its pathway is carbohydrate metabolism; galactose metabolism. The protein operates within carbohydrate metabolism; hexose metabolism. Functionally, mutarotase converts alpha-aldose to the beta-anomer. It is active on D-glucose, L-arabinose, D-xylose, D-galactose, maltose and lactose. This is Bifunctional protein GAL10 (GAL10) from Candida maltosa (Yeast).